We begin with the raw amino-acid sequence, 93 residues long: Small ribosomal subunit protein uS19 (93 aa).

Belongs to the universal ribosomal protein uS19 family.

In terms of biological role, protein S19 forms a complex with S13 that binds strongly to the 16S ribosomal RNA. This Synechococcus sp. (strain JA-3-3Ab) (Cyanobacteria bacterium Yellowstone A-Prime) protein is Small ribosomal subunit protein uS19.